A 158-amino-acid polypeptide reads, in one-letter code: Naphthalene 1,2-dioxygenase system, small oxygenase component (158 aa).

This sequence belongs to the bacterial ring-hydroxylating dioxygenase beta subunit family. In terms of assembly, the naphthalene dioxygenase (NDO) multicomponent enzyme system is composed of an electron transfer component and a dioxygenase component (iron sulfur protein (ISP)). The electron transfer component is composed of a ferredoxin reductase (NdoR) and a ferredoxin (NdoA), and the dioxygenase component is formed of a heterohexamer (trimer of heterodimers) of three large alpha subunits (NdoB) and three small beta subunits (NdoC).

It participates in aromatic compound metabolism; naphthalene degradation. Its function is as follows. Component of the naphthalene dioxygenase (NDO) multicomponent enzyme system which catalyzes the incorporation of both atoms of molecular oxygen into naphthalene to form cis-(1R,2S)-dihydroxy-1,2-dihydronaphthalene. The beta subunit seems to have a structural role in the holoenzyme. This is Naphthalene 1,2-dioxygenase system, small oxygenase component from Pseudomonas fluorescens.